A 1651-amino-acid chain; its full sequence is MKWKHVPFLVMISLLSLSPNHLFLAQLIPDPEDVERGNDHGTPIPTSDNDDNSLGYTGSRLRQEDFPPRIVEHPSDLIVSKGEPATLNCKAEGRPTPTIEWYKGGERVETDKDDPRSHRMLLPSGSLFFLRIVHGRKSRPDEGVYVCVARNYLGEAVSHNASLEVAILRDDFRQNPSDVMVAVGEPAVMECQPPRGHPEPTISWKKDGSPLDDKDERITIRGGKLMITYTRKSDAGKYVCVGTNMVGERESEVAELTVLERPSFVKRPSNLAVTVDDSAEFKCEARGDPVPTVRWRKDDGELPKSRYEIRDDHTLKIRKVTAGDMGSYTCVAENMVGKAEASATLTVQEPPHFVVKPRDQVVALGRTVTFQCEATGNPQPAIFWRREGSQNLLFSYQPPQSSSRFSVSQTGDLTITNVQRSDVGYYICQTLNVAGSIITKAYLEVTDVIADRPPPVIRQGPVNQTVAVDGTFVLSCVATGSPVPTILWRKDGVLVSTQDSRIKQLENGVLQIRYAKLGDTGRYTCIASTPSGEATWSAYIEVQEFGVPVQPPRPTDPNLIPSAPSKPEVTDVSRNTVTLSWQPNLNSGATPTSYIIEAFSHASGSSWQTVAENVKTETSAIKGLKPNAIYLFLVRAANAYGISDPSQISDPVKTQDVLPTSQGVDHKQVQRELGNAVLHLHNPTVLSSSSIEVHWTVDQQSQYIQGYKILYRPSGANHGESDWLVFEVRTPAKNSVVIPDLRKGVNYEIKARPFFNEFQGADSEIKFAKTLEEAPSAPPQGVTVSKNDGNGTAILVSWQPPPEDTQNGMVQEYKVWCLGNETRYHINKTVDGSTFSVVIPFLVPGIRYSVEVAASTGAGSGVKSEPQFIQLDAHGNPVSPEDQVSLAQQISDVVKQPAFIAGIGAACWIILMVFSIWLYRHRKKRNGLTSTYAGIRKVPSFTFTPTVTYQRGGEAVSSGGRPGLLNISEPAAQPWLADTWPNTGNNHNDCSISCCTAGNGNSDSNLTTYSRPADCIANYNNQLDNKQTNLMLPESTVYGDVDLSNKINEMKTFNSPNLKDGRFVNPSGQPTPYATTQLIQSNLSNNMNNGSGDSGEKHWKPLGQQKQEVAPVQYNIVEQNKLNKDYRANDTVPPTIPYNQSYDQNTGGSYNSSDRGSSTSGSQGHKKGARTPKVPKQGGMNWADLLPPPPAHPPPHSNSEEYNISVDESYDQEMPCPVPPARMYLQQDELEEEEDERGPTPPVRGAASSPAAVSYSHQSTATLTPSPQEELQPMLQDCPEETGHMQHQPDRRRQPVSPPPPPRPISPPHTYGYISGPLVSDMDTDAPEEEEDEADMEVAKMQTRRLLLRGLEQTPASSVGDLESSVTGSMINGWGSASEEDNISSGRSSVSSSDGSFFTDADFAQAVAAAAEYAGLKVARRQMQDAAGRRHFHASQCPRPTSPVSTDSNMSAAVMQKTRPAKKLKHQPGHLRRETYTDDLPPPPVPPPAIKSPTAQSKTQLEVRPVVVPKLPSMDARTDRSSDRKGSSYKGREVLDGRQVVDMRTNPGDPREAQEQQNDGKGRGNKAAKRDLPPAKTHLIQEDILPYCRPTFPTSNNPRDPSSSSSMSSRGSGSRQREQANVGRRNIAEMQVLGGYERGEDNNEELEETES.

The first 25 residues, M1 to A25, serve as a signal peptide directing secretion. At Q26–P897 the chain is on the extracellular side. The segment at D33–T57 is disordered. Residues I44–Y56 show a composition bias toward polar residues. Ig-like C2-type domains lie at P68–E164, D170–T257, P262–T346, P351–T446, and P455–E541. The cysteines at positions 89 and 147 are disulfide-linked. N160 is a glycosylation site (N-linked (GlcNAc...) asparagine). Disulfide bonds link C191/C240, C283/C330, and C372/C428. Residue N463 is glycosylated (N-linked (GlcNAc...) asparagine). A disulfide bond links C476 and C525. Fibronectin type-III domains follow at residues A563–V657, A676–E773, and P778–H874. N-linked (GlcNAc...) asparagine glycosylation is found at N790, N820, and N827. The chain crosses the membrane as a helical span at residues A898–L918. At Y919 to S1651 the chain is on the cytoplasmic side. Position 940 is a phosphoserine (S940). T948 is modified (phosphothreonine). Position 1038 is a phosphotyrosine; by ABL; in vitro (Y1038). S1055 is subject to Phosphoserine. Phosphotyrosine; by ABL; in vitro occurs at positions 1073 and 1114. 4 disordered regions span residues K1124–Y1202, Y1224–E1337, E1352–F1397, and R1420–S1651. Residues P1137–T1146 are compositionally biased toward polar residues. The span at G1147 to Q1163 shows a compositional bias: low complexity. Over residues L1186–H1196 the composition is skewed to pro residues. At T1240 the chain carries Phosphothreonine. Over residues Y1255–E1269 the composition is skewed to polar residues. Basic and acidic residues predominate over residues E1281–R1293. A compositionally biased stretch (pro residues) spans V1296 to P1307. S1297 carries the post-translational modification Phosphoserine. Positions M1322–M1336 are enriched in acidic residues. Low complexity predominate over residues S1384–F1397. Residues P1438–S1451 are compositionally biased toward polar residues. Residues R1459 to H1470 are compositionally biased toward basic residues. Over residues L1480–I1490 the composition is skewed to pro residues. Composition is skewed to basic and acidic residues over residues A1516–V1541 and D1549–P1573. A compositionally biased stretch (polar residues) spans F1592–P1601. A compositionally biased stretch (low complexity) spans S1602–S1614. The span at N1642 to S1651 shows a compositional bias: acidic residues.

This sequence belongs to the immunoglobulin superfamily. ROBO family. As to quaternary structure, homodimer. Dimerization is mediated by the extracellular domain and is independent of SLIT liganding. Interacts with SLIT1. Interacts with SLIT2. Interacts with FLRT3. Interacts with MYO9B (via Rho-GAP domain). In terms of processing, ubiquitinated. May be deubiquitinated by USP33. In terms of tissue distribution, widely expressed, with exception of kidney.

It localises to the cell membrane. The protein localises to the cell projection. It is found in the axon. Its subcellular location is the endoplasmic reticulum-Golgi intermediate compartment membrane. Its function is as follows. Receptor for SLIT1 and SLIT2 that mediates cellular responses to molecular guidance cues in cellular migration, including axonal navigation at the ventral midline of the neural tube and projection of axons to different regions during neuronal development. Interaction with the intracellular domain of FLRT3 mediates axon attraction towards cells expressing NTN1. In axon growth cones, the silencing of the attractive effect of NTN1 by SLIT2 may require the formation of a ROBO1-DCC complex. Plays a role in the regulation of cell migration via its interaction with MYO9B; inhibits MYO9B-mediated stimulation of RHOA GTPase activity, and thereby leads to increased levels of active, GTP-bound RHOA. May be required for lung development. The sequence is that of Roundabout homolog 1 (ROBO1) from Homo sapiens (Human).